Consider the following 813-residue polypeptide: Palmitoyltransferase AKR1 (813 aa).

A disordered region spans residues 1–83 (MAKKKSKSKS…PVTTSNETDP (83 aa)). The Cytoplasmic segment spans residues 1 to 387 (MAKKKSKSKS…KPWVSAKLGK (387 aa)). A compositionally biased stretch (low complexity) spans 9–24 (KSSSPKPKVSSTAAKP). Residues 28 to 46 (DNQQNIENVQDSPSALQQQ) show a composition bias toward polar residues. The span at 47–78 (SATAEESENTATTATPSEGTTATTESSPVTTS) shows a compositional bias: low complexity. ANK repeat units follow at residues 133–162 (PTLA…VLVN), 167–196 (DEIT…NPNQ), 201–231 (LKAS…DPNL), 235–264 (QTYN…STDS), 276–305 (SNRT…DVSK), and 309–338 (SLFI…DIYF). Residues 388-408 (IITFLTPYFLLPLSFNVLSMG) form a helical membrane-spanning segment. Topologically, residues 409–412 (GDQG) are lumenal. The chain crosses the membrane as a helical span at residues 413 to 433 (GFIIPKLILAIGILGGGIYLL). The Cytoplasmic segment spans residues 434 to 452 (NKLIISQYIFDDKKLAKSP). The helical transmembrane segment at 453–473 (ILAGVFSATAFWSVLVWLYNI) threads the bilayer. Over 474-485 (LPTTFIHNFFAN) the chain is Lumenal. Residues 486 to 506 (VIMAILIAIFTWSFFKAMFIN) form a helical membrane-spanning segment. Residues 507 to 579 (PGFVPTPADN…YNDIGVRNHK (73 aa)) lie on the Cytoplasmic side of the membrane. The DHHC domain occupies 536 to 586 (HFCVNSFVRKPLRSRYSKHNKRLIARFDHSCPWVYNDIGVRNHKIFITFVY). Catalysis depends on Cys-566, which acts as the S-palmitoyl cysteine intermediate. A helical transmembrane segment spans residues 580 to 600 (IFITFVYSLNMAIFVFLYLSL). Residues 601–642 (QYFDKVKDQYDSDDEGEGEGFVCSILGDDMCYGYKNHHFHFN) are Lumenal-facing. Residues 643-663 (VFMWDLFQCVWVSFLCIVQTF) form a helical membrane-spanning segment. Residues 664-813 (QILKGLTTWE…VDYYTLYSYH (150 aa)) lie on the Cytoplasmic side of the membrane.

This sequence belongs to the DHHC palmitoyltransferase family. AKR/ZDHHC17 subfamily.

It is found in the early endosome membrane. It localises to the golgi apparatus membrane. It carries out the reaction L-cysteinyl-[protein] + hexadecanoyl-CoA = S-hexadecanoyl-L-cysteinyl-[protein] + CoA. Palmitoyltransferase specific for casein kinase 1. This Candida albicans (strain SC5314 / ATCC MYA-2876) (Yeast) protein is Palmitoyltransferase AKR1 (AKR1).